We begin with the raw amino-acid sequence, 291 residues long: Flap endonuclease (291 aa).

A helical arch region spans residues 82 to 116 (YKGNRDEKYAQRTEEEKALDEQFFEYLKDAFELCK). Lysine 83 serves as a coordination point for DNA. Mg(2+) is bound by residues aspartate 130, aspartate 153, aspartate 155, and aspartate 201. The tract at residues 188-224 (DVEQFISLKAIMGDLGDNIRGVEGIGAKRGYNIIREF) is DNA-binding; H3TH. A 5'-3' exonuclease domain is found at 190–263 (EQFISLKAIM…FRNLILVDLP (74 aa)). Valine 209 and isoleucine 212 together coordinate K(+).

It depends on Mg(2+) as a cofactor. Requires K(+) as cofactor.

The enzyme catalyses Exonucleolytic cleavage in the 5'- to 3'-direction to yield nucleoside 5'-phosphates.. Its activity is regulated as follows. Inhibited by p-hydroxymercuribenzoate (PHMB). Its function is as follows. Catalyzes both the 5'-exonucleolytic and structure-specific endonucleolytic hydrolysis of DNA branched nucleic acid molecules and probably plays a role in viral genome replication. Active on flap (branched duplex DNA containing a free single-stranded 5'-end), 5'overhangs and pseudo-Y structures. The substrates require a free, single-stranded 5' end, with endonucleolytic hydrolysis occurring at the junction of double- and single-stranded DNA. This function may be used for example to trim such branched molecules generated by Okazaki fragments synthesis during replication. This chain is Flap endonuclease (D15), found in Escherichia phage T5 (Enterobacteria phage T5).